The sequence spans 142 residues: Transcription antitermination protein NusB (142 aa).

The protein belongs to the NusB family.

Functionally, involved in transcription antitermination. Required for transcription of ribosomal RNA (rRNA) genes. Binds specifically to the boxA antiterminator sequence of the ribosomal RNA (rrn) operons. This Anaeromyxobacter dehalogenans (strain 2CP-1 / ATCC BAA-258) protein is Transcription antitermination protein NusB.